The chain runs to 320 residues: Protein MRH1 (320 aa).

The Extracellular segment spans residues 1–34; that stretch reads MSTFETLIKRGGNEAIKINPPTGADFHITSRGSD. Residues 35 to 55 traverse the membrane as a helical segment; that stretch reads WFWTCFCCYLLFGLILTFLMF. Residues 56–62 are Cytoplasmic-facing; that stretch reads RKPVNDR. Residues 63–83 traverse the membrane as a helical segment; the sequence is FFYLTGIAPNFFMCIAYFTMA. Residues 84–116 are Extracellular-facing; the sequence is SNLGWIPVKAKYNHVQTSTQKEHPGYRQIFYSR. A helical transmembrane segment spans residues 117 to 137; the sequence is FVGWFLALPWPIIQICMLAGT. Residues 138 to 141 lie on the Cytoplasmic side of the membrane; it reads PFWQ. The chain crosses the membrane as a helical span at residues 142 to 162; that stretch reads MAFNVCITEFFTVCWLIAACV. Over 163-167 the chain is Extracellular; sequence HSTYK. The chain crosses the membrane as a helical span at residues 168-188; sequence WGYYTIGLGAAIVVSISVMTT. At 189 to 204 the chain is on the cytoplasmic side; that stretch reads SYNLVKQRDNDIRLTF. Residues 205–225 traverse the membrane as a helical segment; the sequence is LVFFSIIMFLWIIAYPTCFGI. Over 226 to 238 the chain is Extracellular; that stretch reads TDGGNVLQPDSAG. Residues 239–259 traverse the membrane as a helical segment; the sequence is IFYGIIDLILMCFIPTLLVPI. Residues 260 to 320 are Cytoplasmic-facing; the sequence is ANHFGADKLG…KSKKSKKSEE (61 aa). A disordered region spans residues 285–320; that stretch reads APVASPRPAATPNLSKDKKKKSKKSKKSKKSKKSEE. Serine 289 is modified (phosphoserine). Position 295 is a phosphothreonine (threonine 295). Position 299 is a phosphoserine (serine 299). The segment covering 301-320 has biased composition (basic residues); it reads DKKKKSKKSKKSKKSKKSEE.

It belongs to the archaeal/bacterial/fungal opsin family.

The protein localises to the cell membrane. It is found in the mitochondrion. The protein resides in the bud. In Saccharomyces cerevisiae (strain ATCC 204508 / S288c) (Baker's yeast), this protein is Protein MRH1 (MRH1).